The primary structure comprises 99 residues: Malonate decarboxylase acyl carrier protein (99 aa).

Position 25 is an O-(phosphoribosyl dephospho-coenzyme A)serine (S25).

The protein belongs to the MdcC family. Covalently binds the prosthetic group of malonate decarboxylase.

It localises to the cytoplasm. Subunit of malonate decarboxylase, it is an acyl carrier protein to which acetyl and malonyl thioester residues are bound via a 2'-(5''-phosphoribosyl)-3'-dephospho-CoA prosthetic group and turn over during the catalytic mechanism. The sequence is that of Malonate decarboxylase acyl carrier protein from Pseudomonas aeruginosa (strain LESB58).